The following is a 138-amino-acid chain: MMNAEAKPGDWLGKVRWDANGLVPVIAQDAATNDVLMFAWMNRDALAKTIELKRAVYYSRSRQRLWFKGEESGHVQHVHEVRLDCDEDVVLLKVEQVEGIACHTGRRSCFFQKFEGTVDDGEWVAVDPVLKDPEHIYK.

Aspartate 84 is a Mg(2+) binding site. Cysteine 85 serves as a coordination point for Zn(2+). Positions 86 and 88 each coordinate Mg(2+). Zn(2+)-binding residues include cysteine 102 and cysteine 109.

This sequence belongs to the PRA-CH family. As to quaternary structure, homodimer. Mg(2+) is required as a cofactor. Requires Zn(2+) as cofactor.

The protein localises to the cytoplasm. The catalysed reaction is 1-(5-phospho-beta-D-ribosyl)-5'-AMP + H2O = 1-(5-phospho-beta-D-ribosyl)-5-[(5-phospho-beta-D-ribosylamino)methylideneamino]imidazole-4-carboxamide. It functions in the pathway amino-acid biosynthesis; L-histidine biosynthesis; L-histidine from 5-phospho-alpha-D-ribose 1-diphosphate: step 3/9. Its function is as follows. Catalyzes the hydrolysis of the adenine ring of phosphoribosyl-AMP. The sequence is that of Phosphoribosyl-AMP cyclohydrolase from Burkholderia pseudomallei (strain K96243).